The following is a 995-amino-acid chain: Translation initiation factor IF-2 (995 aa).

Positions 53–399 are disordered; it reads NNAGSPAPAA…SGAPRGQGQV (347 aa). 2 stretches are compositionally biased toward pro residues: residues 60–87 and 104–119; these read PAAP…PPGG and TPGP…PPQS. Over residues 135-160 the composition is skewed to low complexity; sequence AAAEARAAALKAEQEAAVKAAQAARQ. A compositionally biased stretch (basic and acidic residues) spans 161–171; that stretch reads QQRENVRREPP. Positions 177 to 192 are enriched in pro residues; that stretch reads RPGPRPGPGTMPPRPG. A compositionally biased stretch (low complexity) spans 193-202; sequence SPAAGRSGAP. 2 stretches are compositionally biased toward pro residues: residues 203-213 and 242-264; these read APGPGPRPGGR and RPSP…PSPA. Residues 273 to 363 show a composition bias toward gly residues; that stretch reads RPGGPGSGRP…GAAGAFGRPG (91 aa). The span at 367 to 376 shows a compositional bias: basic residues; it reads TRGRKSKKQR. The tr-type G domain maps to 486-658; it reads SRPPVVTVMG…VLLTADASLE (173 aa). Positions 495-502 are G1; sequence GHVDHGKT. 495–502 is a GTP binding site; sequence GHVDHGKT. Positions 520–524 are G2; that stretch reads GITQH. The G3 stretch occupies residues 545–548; it reads DTPG. GTP-binding positions include 545-549 and 599-602; these read DTPGH and NKID. The interval 599 to 602 is G4; that stretch reads NKID. Positions 635-637 are G5; sequence AAK.

Belongs to the TRAFAC class translation factor GTPase superfamily. Classic translation factor GTPase family. IF-2 subfamily.

It localises to the cytoplasm. One of the essential components for the initiation of protein synthesis. Protects formylmethionyl-tRNA from spontaneous hydrolysis and promotes its binding to the 30S ribosomal subunits. Also involved in the hydrolysis of GTP during the formation of the 70S ribosomal complex. The polypeptide is Translation initiation factor IF-2 (Salinispora arenicola (strain CNS-205)).